A 317-amino-acid polypeptide reads, in one-letter code: Ubiquinone biosynthesis protein COQ9-A, mitochondrial (317 aa).

The transit peptide at 1 to 46 (MAASVTRVLKGAGGRQLLLMVARRRPVLMQPFLLMPRKFWVSSALR) directs the protein to the mitochondrion. The disordered stretch occupies residues 50 to 97 (QRQPPFSASSTHAETQGHAEEQYQQKQPPPRYTDQAGEESEGYESEEQ). Over residues 53–63 (PPFSASSTHAE) the composition is skewed to polar residues. Positions 85–96 (AGEESEGYESEE) are enriched in acidic residues. Arg-243 contacts a 1,2-diacylglycero-3-phosphoethanolamine.

It belongs to the COQ9 family. As to quaternary structure, homodimer. Heterodimer; two heterodimers of COQ7:COQ9 come together on the same side of the lipid pseudo-bilayer and form a curved tetramer with a hydrophobic surface suitable for membrane interaction. These two tetramers assemble into a soluble octamer with a pseudo-bilayer of lipids captured within. Interacts with COQ7; this interaction allows ubiquinone (CoQ) isoprene intermediates presentation to COQ7 and facilitates the COQ7-mediated hydroxylase step.

The protein resides in the mitochondrion. Its pathway is cofactor biosynthesis; ubiquinone biosynthesis. In terms of biological role, membrane-associated protein that warps the membrane surface to access and bind aromatic isoprenes with high specificity, including ubiquinone (CoQ) isoprene intermediates and presents them directly to COQ7, therefore facilitating the COQ7-mediated hydroxylase step. Participates in the biosynthesis of coenzyme Q, also named ubiquinone, an essential lipid-soluble electron transporter for aerobic cellular respiration. This Xenopus laevis (African clawed frog) protein is Ubiquinone biosynthesis protein COQ9-A, mitochondrial (coq9-a).